The chain runs to 498 residues: Glutamyl-tRNA(Gln) amidotransferase subunit A (498 aa).

Catalysis depends on charge relay system residues Lys-79 and Ser-154. Residue Ser-178 is the Acyl-ester intermediate of the active site.

It belongs to the amidase family. GatA subfamily. In terms of assembly, heterotrimer of A, B and C subunits.

The enzyme catalyses L-glutamyl-tRNA(Gln) + L-glutamine + ATP + H2O = L-glutaminyl-tRNA(Gln) + L-glutamate + ADP + phosphate + H(+). Allows the formation of correctly charged Gln-tRNA(Gln) through the transamidation of misacylated Glu-tRNA(Gln) in organisms which lack glutaminyl-tRNA synthetase. The reaction takes place in the presence of glutamine and ATP through an activated gamma-phospho-Glu-tRNA(Gln). The sequence is that of Glutamyl-tRNA(Gln) amidotransferase subunit A from Psychrobacter cryohalolentis (strain ATCC BAA-1226 / DSM 17306 / VKM B-2378 / K5).